Reading from the N-terminus, the 153-residue chain is ORM1-like protein 2 (153 aa).

Over 1-21 the chain is Cytoplasmic; the sequence is MNVGVAHSEVNPNTRVMSSRG. The next 2 helical transmembrane spans lie at 22–42 and 43–63; these read IWLA…SIPF and FSIP…MYLL. At 64-105 the chain is on the cytoplasmic side; the sequence is LHTVKGTPFETPDQGKDRLLTHWEQIDYGMQCTSSRKFLSIS. The helical transmembrane segment at 106 to 126 threads the bilayer; the sequence is PVVLYLLTSFYIKYDPAHFMI. The Extracellular portion of the chain corresponds to 127 to 153; that stretch reads NTASLLSVLLPKLPQFHGVRVFGINKY.

The protein belongs to the ORM family. As to quaternary structure, ceramide-sensitive subunit of the serine palmitoyltransferase (SPT) complex, which is also composed of SPTLC1, SPTLC2/3 and SPTSSA/B.

It localises to the endoplasmic reticulum membrane. In terms of biological role, plays an essential role in the homeostatic regulation of sphingolipid de novo biosynthesis by modulating the activity of the serine palmitoyltransferase (SPT) in response to ceramide levels. When complexed to SPT, the binding of ceramides to its N-terminus stabilizes a conformation that block SPT substrate entry, hence preventing SPT catalytic activity. Through this mechanism, maintains ceramide levels at sufficient concentrations for the production of complex sphingolipids, but which prevents the accumulation of ceramides to levels that trigger apoptosis. The chain is ORM1-like protein 2 (ORMDL2) from Gallus gallus (Chicken).